The sequence spans 150 residues: FAD synthase (150 aa).

ATP-binding positions include 8-9, 13-16, aspartate 95, and histidine 122; these read AF and HPGH.

The protein belongs to the archaeal FAD synthase family. Homodimer. The cofactor is a divalent metal cation.

It catalyses the reaction FMN + ATP + H(+) = FAD + diphosphate. It functions in the pathway cofactor biosynthesis; FAD biosynthesis; FAD from FMN: step 1/1. Its function is as follows. Catalyzes the transfer of the AMP portion of ATP to flavin mononucleotide (FMN) to produce flavin adenine dinucleotide (FAD) coenzyme. The sequence is that of FAD synthase from Methanobrevibacter ruminantium (strain ATCC 35063 / DSM 1093 / JCM 13430 / OCM 146 / M1) (Methanobacterium ruminantium).